We begin with the raw amino-acid sequence, 210 residues long: Imidazoleglycerol-phosphate dehydratase (210 aa).

The segment at 1–23 (MNDSLLSNGHAPPLRQATVDRQT) is disordered.

The protein belongs to the imidazoleglycerol-phosphate dehydratase family.

It localises to the cytoplasm. The catalysed reaction is D-erythro-1-(imidazol-4-yl)glycerol 3-phosphate = 3-(imidazol-4-yl)-2-oxopropyl phosphate + H2O. It functions in the pathway amino-acid biosynthesis; L-histidine biosynthesis; L-histidine from 5-phospho-alpha-D-ribose 1-diphosphate: step 6/9. This chain is Imidazoleglycerol-phosphate dehydratase, found in Thermosynechococcus vestitus (strain NIES-2133 / IAM M-273 / BP-1).